Here is a 334-residue protein sequence, read N- to C-terminus: Holliday junction branch migration complex subunit RuvB (334 aa).

Residues 1-182 (MDERLVSSEL…FGVLSRLEYY (182 aa)) form a large ATPase domain (RuvB-L) region. ATP contacts are provided by residues Leu21, Arg22, Gly63, Lys66, Thr67, Thr68, 129-131 (EDF), Arg172, Tyr182, and Arg219. Thr67 contacts Mg(2+). Residues 183-253 (TRDELSEIVI…VAVDALERLQ (71 aa)) form a small ATPAse domain (RuvB-S) region. The head domain (RuvB-H) stretch occupies residues 256–334 (KLGLDHIDRK…HFKMEVPNHD (79 aa)). DNA is bound by residues Arg311 and Arg316.

It belongs to the RuvB family. Homohexamer. Forms an RuvA(8)-RuvB(12)-Holliday junction (HJ) complex. HJ DNA is sandwiched between 2 RuvA tetramers; dsDNA enters through RuvA and exits via RuvB. An RuvB hexamer assembles on each DNA strand where it exits the tetramer. Each RuvB hexamer is contacted by two RuvA subunits (via domain III) on 2 adjacent RuvB subunits; this complex drives branch migration. In the full resolvosome a probable DNA-RuvA(4)-RuvB(12)-RuvC(2) complex forms which resolves the HJ.

Its subcellular location is the cytoplasm. The enzyme catalyses ATP + H2O = ADP + phosphate + H(+). In terms of biological role, the RuvA-RuvB-RuvC complex processes Holliday junction (HJ) DNA during genetic recombination and DNA repair, while the RuvA-RuvB complex plays an important role in the rescue of blocked DNA replication forks via replication fork reversal (RFR). RuvA specifically binds to HJ cruciform DNA, conferring on it an open structure. The RuvB hexamer acts as an ATP-dependent pump, pulling dsDNA into and through the RuvAB complex. RuvB forms 2 homohexamers on either side of HJ DNA bound by 1 or 2 RuvA tetramers; 4 subunits per hexamer contact DNA at a time. Coordinated motions by a converter formed by DNA-disengaged RuvB subunits stimulates ATP hydrolysis and nucleotide exchange. Immobilization of the converter enables RuvB to convert the ATP-contained energy into a lever motion, pulling 2 nucleotides of DNA out of the RuvA tetramer per ATP hydrolyzed, thus driving DNA branch migration. The RuvB motors rotate together with the DNA substrate, which together with the progressing nucleotide cycle form the mechanistic basis for DNA recombination by continuous HJ branch migration. Branch migration allows RuvC to scan DNA until it finds its consensus sequence, where it cleaves and resolves cruciform DNA. The protein is Holliday junction branch migration complex subunit RuvB of Bacillus licheniformis (strain ATCC 14580 / DSM 13 / JCM 2505 / CCUG 7422 / NBRC 12200 / NCIMB 9375 / NCTC 10341 / NRRL NRS-1264 / Gibson 46).